Here is a 1085-residue protein sequence, read N- to C-terminus: DNA mismatch repair protein MutS (1085 aa).

Residues 533–564 form a disordered region; that stretch reads DEDLFGEEEQNAPPVGSSNHAVGTQPSADDEA. Over residues 548–559 the composition is skewed to polar residues; that stretch reads GSSNHAVGTQPS. 812–819 is a binding site for ATP; sequence GPNMSGKS. The tract at residues 997–1042 is disordered; sequence ERRAPRSAPPTVPARGDDRRSAGRASSSGAGAARGEQGRTLPDGQL. Over residues 1019–1031 the composition is skewed to low complexity; sequence GRASSSGAGAARG.

This sequence belongs to the DNA mismatch repair MutS family.

Functionally, this protein is involved in the repair of mismatches in DNA. It is possible that it carries out the mismatch recognition step. This protein has a weak ATPase activity. The protein is DNA mismatch repair protein MutS of Roseiflexus sp. (strain RS-1).